The primary structure comprises 555 residues: MAVAAWLQVSPVIFLLLGAQPFPLSFLGAGPAPVFAADRSKWHIPMPSGKGYFNFGKILFRNTTILLKFDGEPCDQSLNITWFLKSADCYNEIYNFKADEIESYLENLKGKKGLSGRYQTSSRLFQNCSELYKAQSFSGDFTHRLPLLGEKQEAKENATNVTFTGDKIAMHEPLQTWQDAPYIFIVHVGISSSKESPKENALSNLFTMTVEVKGPYEYLTLEDYPLMIFFMVMCIVYVLFGVLWLAWSACYWRDLLRIQFWIGAVIFLGMFEKAVFYAEFQNIRYKGESVQNALVLAELLSAVKRSLARTLVIIVSLGYGIVKPRLGVTLHKVVVAGALYLLFSGMEGVLRVTGAQTDLASLAFIPLAFLDTALCWWIFISLTQTMKLLKLRRNIVKLSLYRHFTNTLILAVAASIVFIIWTTMKFRIVTCQSDWRELWVDDAIWRLLFSMILFVIMILWRPSANNQRFAFSPLSEEDEEDEQKEPMLKESFEGMKMRSTKQEPNGTSKVNKAQEDDLKWVEENVPSSVTDVALPALLDSDEERMITHFERSKME.

The first 21 residues, 1-21 (MAVAAWLQVSPVIFLLLGAQP), serve as a signal peptide directing secretion. The Lumenal segment spans residues 22-225 (FPLSFLGAGP…YEYLTLEDYP (204 aa)). 2 disulfides stabilise this stretch: Cys74–Cys128 and Cys89–Cys431. Residues Asn79, Asn157, and Asn160 are each glycosylated (N-linked (GlcNAc...) asparagine). A helical transmembrane segment spans residues 226–246 (LMIFFMVMCIVYVLFGVLWLA). The Cytoplasmic portion of the chain corresponds to 247–257 (WSACYWRDLLR). The helical transmembrane segment at 258-278 (IQFWIGAVIFLGMFEKAVFYA) threads the bilayer. Topologically, residues 279–305 (EFQNIRYKGESVQNALVLAELLSAVKR) are lumenal. Residues 306–322 (SLARTLVIIVSLGYGIV) form a helical membrane-spanning segment. Over 323–325 (KPR) the chain is Cytoplasmic. Residues 326–346 (LGVTLHKVVVAGALYLLFSGM) form a helical membrane-spanning segment. At 347–361 (EGVLRVTGAQTDLAS) the chain is on the lumenal side. The helical transmembrane segment at 362–382 (LAFIPLAFLDTALCWWIFISL) threads the bilayer. At 383 to 403 (TQTMKLLKLRRNIVKLSLYRH) the chain is on the cytoplasmic side. A helical transmembrane segment spans residues 404–424 (FTNTLILAVAASIVFIIWTTM). The Lumenal segment spans residues 425 to 437 (KFRIVTCQSDWRE). A helical transmembrane segment spans residues 438 to 458 (LWVDDAIWRLLFSMILFVIMI). Topologically, residues 459–555 (LWRPSANNQR…ITHFERSKME (97 aa)) are cytoplasmic. Residues 491-515 (SFEGMKMRSTKQEPNGTSKVNKAQE) form a disordered region. The segment covering 502–511 (QEPNGTSKVN) has biased composition (polar residues). Ser540 carries the post-translational modification Phosphoserine.

Belongs to the LU7TM family. TMEM87 subfamily. May interact with STOML3; STOML3 potentiates the mechanosensitive ion channel activity associated with TMEM87A. As to expression, highly expressed in sensory neurons responsive to mechanical force.

It localises to the cell membrane. Its subcellular location is the golgi apparatus membrane. The protein resides in the cell projection. It is found in the ruffle. Its function is as follows. Potential monoatomic ion channel gated by mechanical force, implicated in normal touch sensitivity through the generation of mechanically activated currents. However, a direct channel activity is debated and an alternative could be that it functions as a chaperone for an unidentified mechanosensitive ion channel. Could also be involved in cell mechanosensitivity regulating cell adhesion and migration. May also be involved in retrograde transport from endosomes to the trans-Golgi network (TGN). The protein is Transmembrane protein 87A of Mus musculus (Mouse).